Here is a 445-residue protein sequence, read N- to C-terminus: MSRKYFGTDGIRGRVGEFPITPDFVLKLGWAVGMAFRRQGNCRVLIGKDTRSSGYMFESAFEAGLSASGADTLLLGPMPTPGIAYLTRTFHAEAGVVISASHNPHDDNGIKFFSGQGTKLPDDVELMIEELLDAPMTVVESARLGKVSRINDAAGRYIEFCKSSVPTSTDFNGLKVVLDCANGATYKIAPSVFRELGAEVTVLAASPNGLNINDKCGSTHLDGLQAAVVEHHADLGIAFDGDGDRVMMVDHTGAVVDGDELLFLIARDLQESGRLQGGVVGTLMSNLGLELALQELHIPFVRAKVGDRYVMAELLARNWMLGGENSGHIVCCQNTTTGDAIIAALQVLMALKHRGQTLAEARQGIRKCPQVLINVRFKGESDPLEHPSVKEASVRVTEQMGGRGRVLLRKSGTEPLVRVMVEGDEEASVRAHAEQLAKIVSEVCA.

Catalysis depends on Ser101, which acts as the Phosphoserine intermediate. Residues Ser101, Asp240, Asp242, and Asp244 each contribute to the Mg(2+) site. Ser101 carries the post-translational modification Phosphoserine.

Belongs to the phosphohexose mutase family. The cofactor is Mg(2+). Activated by phosphorylation.

It carries out the reaction alpha-D-glucosamine 1-phosphate = D-glucosamine 6-phosphate. Its function is as follows. Catalyzes the conversion of glucosamine-6-phosphate to glucosamine-1-phosphate. The sequence is that of Phosphoglucosamine mutase from Pseudomonas aeruginosa (strain LESB58).